A 338-amino-acid polypeptide reads, in one-letter code: tRNA pseudouridine synthase D (338 aa).

The active-site Nucleophile is Asp79. The region spanning 154-303 (GVPNYFGEQR…EEAWRANILY (150 aa)) is the TRUD domain.

The protein belongs to the pseudouridine synthase TruD family.

It catalyses the reaction uridine(13) in tRNA = pseudouridine(13) in tRNA. In terms of biological role, responsible for synthesis of pseudouridine from uracil-13 in transfer RNAs. This chain is tRNA pseudouridine synthase D, found in Legionella pneumophila (strain Lens).